Consider the following 475-residue polypeptide: Aspartyl/glutamyl-tRNA(Asn/Gln) amidotransferase subunit B (475 aa).

The protein belongs to the GatB/GatE family. GatB subfamily. In terms of assembly, heterotrimer of A, B and C subunits.

It carries out the reaction L-glutamyl-tRNA(Gln) + L-glutamine + ATP + H2O = L-glutaminyl-tRNA(Gln) + L-glutamate + ADP + phosphate + H(+). It catalyses the reaction L-aspartyl-tRNA(Asn) + L-glutamine + ATP + H2O = L-asparaginyl-tRNA(Asn) + L-glutamate + ADP + phosphate + 2 H(+). Its function is as follows. Allows the formation of correctly charged Asn-tRNA(Asn) or Gln-tRNA(Gln) through the transamidation of misacylated Asp-tRNA(Asn) or Glu-tRNA(Gln) in organisms which lack either or both of asparaginyl-tRNA or glutaminyl-tRNA synthetases. The reaction takes place in the presence of glutamine and ATP through an activated phospho-Asp-tRNA(Asn) or phospho-Glu-tRNA(Gln). The sequence is that of Aspartyl/glutamyl-tRNA(Asn/Gln) amidotransferase subunit B from Bacillus cereus (strain B4264).